Reading from the N-terminus, the 383-residue chain is E3 ubiquitin-protein ligase SPL2 (383 aa).

Residues 1 to 14 (MSSPERALLNLLTD) are Cytoplasmic-facing. Residues 15–35 (IALSFDGAILGLTLAVSAVGS) form a helical membrane-spanning segment. The Chloroplast intermembrane portion of the chain corresponds to 36 to 269 (ALKYASTNAA…MIEDLMEQTN (234 aa)). Residues 270–290 (FIFLGSVILGIVSVGILSYAA) form a helical membrane-spanning segment. Topologically, residues 291–383 (VRTWNKWKQW…IRGSMRVYYS (93 aa)) are cytoplasmic. An RING-type zinc finger spans residues 331–370 (CVICVSRRRVPAFIPCGHVVCCRRCASTVERELNPKCPVC).

It is found in the plastid. It localises to the chloroplast outer membrane. The enzyme catalyses S-ubiquitinyl-[E2 ubiquitin-conjugating enzyme]-L-cysteine + [acceptor protein]-L-lysine = [E2 ubiquitin-conjugating enzyme]-L-cysteine + N(6)-ubiquitinyl-[acceptor protein]-L-lysine.. The protein operates within protein modification; protein ubiquitination. In terms of biological role, possesses E3 ubiquitin-protein ligase activity. The protein is E3 ubiquitin-protein ligase SPL2 of Arabidopsis thaliana (Mouse-ear cress).